We begin with the raw amino-acid sequence, 119 residues long: Immunoglobulin lambda variable 2-11 (119 aa).

The signal sequence occupies residues 1–19 (MAWALLLLSLLTQGTGSWA). Position 20 is a pyrrolidone carboxylic acid (Gln20). The segment at 20-44 (QSALTQPRSVSGSPGQSVTISCTGT) is framework-1. Residues 20–119 (QSALTQPRSV…CSYAGSYTFH (100 aa)) form the Ig-like domain. Cys41 and Cys109 are disulfide-bonded. The segment at 45–53 (SSDVGGYNY) is complementarity-determining-1. A framework-2 region spans residues 54–70 (VSWYQQHPGKAPKLMIY). The complementarity-determining-2 stretch occupies residues 71-73 (DVS). The interval 74–109 (KRPSGVPDRFSGSKSGNTASLTISGLQAEDEADYYC) is framework-3. The complementarity-determining-3 stretch occupies residues 110 to 119 (CSYAGSYTFH).

In terms of assembly, immunoglobulins are composed of two identical heavy chains and two identical light chains; disulfide-linked.

The protein localises to the secreted. It is found in the cell membrane. In terms of biological role, v region of the variable domain of immunoglobulin light chains that participates in the antigen recognition. Immunoglobulins, also known as antibodies, are membrane-bound or secreted glycoproteins produced by B lymphocytes. In the recognition phase of humoral immunity, the membrane-bound immunoglobulins serve as receptors which, upon binding of a specific antigen, trigger the clonal expansion and differentiation of B lymphocytes into immunoglobulins-secreting plasma cells. Secreted immunoglobulins mediate the effector phase of humoral immunity, which results in the elimination of bound antigens. The antigen binding site is formed by the variable domain of one heavy chain, together with that of its associated light chain. Thus, each immunoglobulin has two antigen binding sites with remarkable affinity for a particular antigen. The variable domains are assembled by a process called V-(D)-J rearrangement and can then be subjected to somatic hypermutations which, after exposure to antigen and selection, allow affinity maturation for a particular antigen. In Homo sapiens (Human), this protein is Immunoglobulin lambda variable 2-11.